The chain runs to 871 residues: Translation initiation factor IF-2 (871 aa).

2 disordered regions span residues 60–101 (KKNI…QEVK) and 184–203 (ESLK…KKES). Positions 61–72 (KNIKTPTAKKPK) are enriched in basic residues. Over residues 73 to 101 (KENIKEQEKLNESEKKEPKKEEKLKQEVK) the composition is skewed to basic and acidic residues. One can recognise a tr-type G domain in the interval 370–537 (TRAPVITIMG…IVLLQADILE (168 aa)). The G1 stretch occupies residues 379 to 386 (GHVDHGKT). GTP is bound at residue 379–386 (GHVDHGKT). A G2 region spans residues 404–408 (GITQH). The interval 425–428 (DTPG) is G3. Residues 425-429 (DTPGH) and 479-482 (NKMD) contribute to the GTP site. The segment at 479–482 (NKMD) is G4. Positions 515 to 517 (SAK) are G5.

Belongs to the TRAFAC class translation factor GTPase superfamily. Classic translation factor GTPase family. IF-2 subfamily.

The protein localises to the cytoplasm. Its function is as follows. One of the essential components for the initiation of protein synthesis. Protects formylmethionyl-tRNA from spontaneous hydrolysis and promotes its binding to the 30S ribosomal subunits. Also involved in the hydrolysis of GTP during the formation of the 70S ribosomal complex. This is Translation initiation factor IF-2 from Campylobacter jejuni subsp. jejuni serotype O:23/36 (strain 81-176).